We begin with the raw amino-acid sequence, 295 residues long: Non-selective voltage-gated ion channel VDAC2 (295 aa).

Positions 24 and 32 each coordinate ATP. Lys32 is modified (N6-acetyllysine; alternate). At Lys32 the chain carries N6-succinyllysine; alternate. Residue Lys32 forms a Glycyl lysine isopeptide (Lys-Gly) (interchain with G-Cter in ubiquitin); alternate linkage. A run of 2 beta stranded transmembrane segments spans residues 38–47 and 51–59; these read LVKLDVKTKS and VEFSTSGSS. Glycyl lysine isopeptide (Lys-Gly) (interchain with G-Cter in ubiquitin) cross-links involve residues Lys65 and Lys73. Transmembrane regions (beta stranded) follow at residues 66–76, 81–88, 92–101, and 107–116; these read VSGTLETKYKW, LTFTEKWN, TLGTEIAIED, and LKLTFDTTFS. Lys121 is modified (N6-acetyllysine; alternate). Residue Lys121 forms a Glycyl lysine isopeptide (Lys-Gly) (interchain with G-Cter in ubiquitin); alternate linkage. Residues Lys122 and Lys125 each participate in a glycyl lysine isopeptide (Lys-Gly) (interchain with G-Cter in ubiquitin) cross-link. 4 beta stranded membrane-spanning segments follow: residues 123-132, 135-142, 149-157, and 162-170; these read SGKIKSAYKR, INLGCDVD, AIHGSAVFG, and LAGYQMTFD. Residue Lys173 forms a Glycyl lysine isopeptide (Lys-Gly) (interchain with G-Cter in ubiquitin) linkage. 6 consecutive transmembrane segments (beta stranded) span residues 175–187, 190–197, 201–210, 214–223, 230–239, and 243–250; these read KLTRSNFAVGYRT, FQLHTNVN, EFGGSIYQKV, FDTSVNLAWT, RFGIAAKYQL, and ASISAKVN. Position 205 is a phosphoserine (Ser205). Ser252 bears the Phosphoserine mark. Residues 254-256 and 272-276 each bind NAD(+); these read LIG and SALVD. 2 beta stranded membrane-spanning segments follow: residues 254-263 and 266-275; these read LIGVGYTQTL and GVKLTLSALV. An N6-acetyllysine; alternate modification is found at Lys278. A Glycyl lysine isopeptide (Lys-Gly) (interchain with G-Cter in ubiquitin); alternate cross-link involves residue Lys278. The chain crosses the membrane as a beta stranded span at residues 285 to 294; the sequence is HKLGLALELE. Lys286 is covalently cross-linked (Glycyl lysine isopeptide (Lys-Gly) (interchain with G-Cter in ubiquitin)).

The protein belongs to the eukaryotic mitochondrial porin family. Monomer, homodimer and higher order oligomers; formation of higher order structures is necessary for scramblase activity. Interacts with ARMC12 in a TBC1D21-dependent manner. Interacts with KLC3. Interacts with SPATA33. Interacts with PPP3CC in a SPATA33-dependent manner. Post-translationally, ubiquitinated by PRKN during mitophagy, leading to its degradation and enhancement of mitophagy. Deubiquitinated by USP30.

The protein resides in the mitochondrion outer membrane. Its subcellular location is the membrane. It carries out the reaction chloride(in) = chloride(out). It catalyses the reaction K(+)(in) = K(+)(out). The enzyme catalyses a 1,2-diacyl-sn-glycero-3-phospho-L-serine(in) = a 1,2-diacyl-sn-glycero-3-phospho-L-serine(out). The catalysed reaction is a 1,2-diacyl-sn-glycero-3-phosphocholine(in) = a 1,2-diacyl-sn-glycero-3-phosphocholine(out). It carries out the reaction a 1,2-diacyl-sn-glycero-3-phospho-(1D-myo-inositol)(in) = a 1,2-diacyl-sn-glycero-3-phospho-(1D-myo-inositol)(out). Functionally, non-selective voltage-gated ion channel that mediates the transport of anions and cations through the mitochondrion outer membrane and plasma membrane. The channel adopts an open conformation at zero mV and a closed conformation at both positive and negative potentials. There are two populations of channels; the main that functions in a lower open-state conductance with lower ion selectivity, that switch, in a voltage-dependent manner, from the open to a low-conducting 'closed' state and the other that has a normal ion selectivity in the typical high conductance, 'open' state. Binds various lipids, including the sphingolipid ceramide, the phospholipid phosphatidylcholine, and the sterols cholesterol and oxysterol. Binding of ceramide promotes the mitochondrial outer membrane permeabilization (MOMP) apoptotic pathway. In terms of biological role, catalyzes the scrambling of phospholipids across the outer mitochondrial membrane; the mechanism is unrelated to channel activity and is capable of translocating both anionic and zwitterionic phospholipids. The sequence is that of Non-selective voltage-gated ion channel VDAC2 from Mesocricetus auratus (Golden hamster).